Here is a 101-residue protein sequence, read N- to C-terminus: NAD(P)H-quinone oxidoreductase subunit 4L, chloroplastic (101 aa).

Transmembrane regions (helical) follow at residues 2-22 (MLEH…YGLI), 32-52 (MCLE…SDLF), and 61-81 (IFSI…LAIV).

This sequence belongs to the complex I subunit 4L family. NDH is composed of at least 16 different subunits, 5 of which are encoded in the nucleus.

Its subcellular location is the plastid. The protein localises to the chloroplast thylakoid membrane. It carries out the reaction a plastoquinone + NADH + (n+1) H(+)(in) = a plastoquinol + NAD(+) + n H(+)(out). The catalysed reaction is a plastoquinone + NADPH + (n+1) H(+)(in) = a plastoquinol + NADP(+) + n H(+)(out). Its function is as follows. NDH shuttles electrons from NAD(P)H:plastoquinone, via FMN and iron-sulfur (Fe-S) centers, to quinones in the photosynthetic chain and possibly in a chloroplast respiratory chain. The immediate electron acceptor for the enzyme in this species is believed to be plastoquinone. Couples the redox reaction to proton translocation, and thus conserves the redox energy in a proton gradient. This is NAD(P)H-quinone oxidoreductase subunit 4L, chloroplastic from Nandina domestica (Heavenly bamboo).